Consider the following 128-residue polypeptide: MRRDEYFEKLLEVIEELKIEAEEKPIIVEGKRDVESLEKLGVEGTFIIIAKTPIYLIADELVRKRVKEVILLTDFDRRGRMLAKAIIEEFRHRGIKVNTKIRHEIFIYTNSGIRDIESLFSYVNKRLF.

In terms of domain architecture, Toprim spans 23–105 (EKPIIVEGKR…KVNTKIRHEI (83 aa)). E29, D74, and D76 together coordinate Mg(2+).

Belongs to the UPF0292 family. Requires Mg(2+) as cofactor.

The chain is UPF0292 protein MJ1624 from Methanocaldococcus jannaschii (strain ATCC 43067 / DSM 2661 / JAL-1 / JCM 10045 / NBRC 100440) (Methanococcus jannaschii).